A 488-amino-acid polypeptide reads, in one-letter code: Ribulose bisphosphate carboxylase large chain (488 aa).

Substrate-binding residues include asparagine 127 and threonine 177. The active-site Proton acceptor is the lysine 179. Lysine 181 lines the substrate pocket. Residues lysine 205, aspartate 207, and glutamate 208 each contribute to the Mg(2+) site. An N6-carboxylysine modification is found at lysine 205. The active-site Proton acceptor is histidine 297. Positions 298, 330, and 382 each coordinate substrate.

This sequence belongs to the RuBisCO large chain family. Type I subfamily. As to quaternary structure, heterohexadecamer of 8 large chains and 8 small chains. Requires Mg(2+) as cofactor.

It localises to the plastid. The protein resides in the chloroplast. It catalyses the reaction 2 (2R)-3-phosphoglycerate + 2 H(+) = D-ribulose 1,5-bisphosphate + CO2 + H2O. The catalysed reaction is D-ribulose 1,5-bisphosphate + O2 = 2-phosphoglycolate + (2R)-3-phosphoglycerate + 2 H(+). RuBisCO catalyzes two reactions: the carboxylation of D-ribulose 1,5-bisphosphate, the primary event in carbon dioxide fixation, as well as the oxidative fragmentation of the pentose substrate in the photorespiration process. Both reactions occur simultaneously and in competition at the same active site. This is Ribulose bisphosphate carboxylase large chain from Pyropia yezoensis (Susabi-nori).